We begin with the raw amino-acid sequence, 525 residues long: Sodium-dependent lysophosphatidylcholine symporter 1 (525 aa).

Residues 1–29 (MEKESENASCAGLLGQKNEPGSPTQSRSG) form a disordered region. The Cytoplasmic segment spans residues 1 to 32 (MEKESENASCAGLLGQKNEPGSPTQSRSGKHK). Residues 33–62 (LSVCSKICFAIGGAPYQITGCALGFFLQIF) form a helical membrane-spanning segment. The Extracellular portion of the chain corresponds to 63–73 (LLDIAQVPPFY). A helical transmembrane segment spans residues 74-94 (ASIILFSGRVWDAITDPLVGF). Over 95–106 (FVSKSSWTRLGR) the chain is Cytoplasmic. A helical transmembrane segment spans residues 107 to 126 (LLPWVVFSTPFAVVSYLLIW). Over 127–137 (FVPGFSGVSMV) the chain is Extracellular. Residues 138-162 (IWYLVFYCLFQTLVTCFHVPYSALT) traverse the membrane as a helical segment. The Cytoplasmic portion of the chain corresponds to 163-169 (MFISKEQ). Residues 170–201 (SDRDSATGYRMTVEVLGTVLGTAIQGQIVGRE) traverse the membrane as a helical segment. Residues 202 to 226 (NTPCVEHIRETHLYNTSVIMEDLNI) lie on the Extracellular side of the membrane. An intrachain disulfide couples Cys205 to Cys458. N-linked (GlcNAc...) asparagine glycans are attached at residues Asn216 and Asn225. A helical transmembrane segment spans residues 227-260 (THDVESLSSTRDAYMIAAGVICAIYVLCAIILTL). Residues 261-291 (GVREKRDAYELLSDQPFSFWQGLKLVMSHKP) are Cytoplasmic-facing. Residues 292 to 318 (YIKLITGFLFTSLAFMLLEGNFALFLT) form a helical membrane-spanning segment. The Extracellular portion of the chain corresponds to 319 to 329 (YTMGFRRDFQN). Residues 330 to 348 (ILLVVMLSATLTVPFWQWF) traverse the membrane as a helical segment. Topologically, residues 349 to 352 (LTRF) are cytoplasmic. A helical membrane pass occupies residues 353-374 (GKKTAVYFGISSVIPFLILVVL). Residues 375 to 377 (MES) are Extracellular-facing. Residues 378-414 (NLILAYVVAVAAGLSVAAAFLLPWSMLPDVIDDFILK) traverse the membrane as a helical segment. Over 415–424 (NPDSHGHEPI) the chain is Cytoplasmic. A helical transmembrane segment spans residues 425-451 (FFSFYVFFTKFASGVSLGISTLSLDFA). The Extracellular portion of the chain corresponds to 452–463 (GYQTRACSQPEQ). The helical transmembrane segment at 464-487 (VNLTLKMLICVAPVILILLGLLLF) threads the bilayer. Residues 488 to 525 (ILYPINEEKRKQNKKALQLIRESNRDSDSDSLELASNV) lie on the Cytoplasmic side of the membrane.

Belongs to the major facilitator superfamily.

Its subcellular location is the cell membrane. It localises to the endoplasmic reticulum membrane. It carries out the reaction a 1-acyl-sn-glycero-3-phosphocholine(in) + Na(+)(in) = a 1-acyl-sn-glycero-3-phosphocholine(out) + Na(+)(out). It catalyses the reaction 1-(4Z,7Z,10Z,13Z,16Z,19Z-docosahexaenoyl)-sn-glycero-3-phosphocholine(in) + Na(+)(in) = 1-(4Z,7Z,10Z,13Z,16Z,19Z-docosahexaenoyl)-sn-glycero-3-phosphocholine(out) + Na(+)(out). The enzyme catalyses 1-(9Z-octadecenoyl)-sn-glycero-3-phosphocholine(in) + Na(+)(in) = 1-(9Z-octadecenoyl)-sn-glycero-3-phosphocholine(out) + Na(+)(out). The catalysed reaction is 1-hexadecanoyl-sn-glycero-3-phosphocholine(in) + Na(+)(in) = 1-hexadecanoyl-sn-glycero-3-phosphocholine(out) + Na(+)(out). It carries out the reaction a 1-acyl-sn-glycero-3-phosphoethanolamine(in) + Na(+)(in) = a 1-acyl-sn-glycero-3-phosphoethanolamine(out) + Na(+)(out). Sodium-dependent lysophosphatidylcholine (LPC) symporter, which plays an essential role for blood-brain barrier formation and function. Specifically expressed in endothelium of the blood-brain barrier of micro-vessels and transports LPC into the brain. Transport of LPC is essential because it constitutes the major mechanism by which docosahexaenoic acid (DHA), an omega-3 fatty acid that is essential for normal brain growth and cognitive function, enters the brain. Transports LPC carrying long-chain fatty acids such LPC oleate and LPC palmitate with a minimum acyl chain length of 14 carbons. Does not transport docosahexaenoic acid in unesterified fatty acid. This chain is Sodium-dependent lysophosphatidylcholine symporter 1 (mfsd2a), found in Xenopus tropicalis (Western clawed frog).